Reading from the N-terminus, the 358-residue chain is Heme A synthase (358 aa).

A run of 8 helical transmembrane segments spans residues 22–42 (IQVWLYSILLLCLAIVLVGGA), 107–127 (VLGRLVGLVALLGLIWFWATK), 133–153 (ILFPLIVVPILIAFQGFIGWW), 172–192 (LAFHLITACLVIIFVTYLSRG), 208–228 (FAAWLVILVLIEIYLGALVAG), 269–289 (FIHRFFAYFLFIVSALHAFYV), 302–322 (AFLIFFIIIIQAILGILTLLH), and 324–344 (VPISLGLIHQSMALVVLCFAV). His-271 is a binding site for heme. His-332 lines the heme pocket.

It belongs to the COX15/CtaA family. Type 2 subfamily. As to quaternary structure, interacts with CtaB. Heme b serves as cofactor.

The protein localises to the cell membrane. It catalyses the reaction Fe(II)-heme o + 2 A + H2O = Fe(II)-heme a + 2 AH2. It functions in the pathway porphyrin-containing compound metabolism; heme A biosynthesis; heme A from heme O: step 1/1. Catalyzes the conversion of heme O to heme A by two successive hydroxylations of the methyl group at C8. The first hydroxylation forms heme I, the second hydroxylation results in an unstable dihydroxymethyl group, which spontaneously dehydrates, resulting in the formyl group of heme A. The polypeptide is Heme A synthase (Bartonella tribocorum (strain CIP 105476 / IBS 506)).